The following is a 218-amino-acid chain: Mitochondrial fission factor (218 aa).

Over 1–198 the chain is Cytoplasmic; sequence MAEISRIQYE…ENKERAKREM (198 aa). Position 89 is a phosphothreonine (Thr-89). 4 positions are modified to phosphoserine: Ser-129, Ser-131, Ser-146, and Ser-171. Positions 167–198 form a coiled coil; it reads VDAASLRRQIIKLNRRLQLLEEENKERAKREM. A helical; Anchor for type IV membrane protein transmembrane segment spans residues 199-216; the sequence is VMYSITVAFWLLNSWLWF. The Mitochondrial intermembrane segment spans residues 217–218; it reads RR.

Belongs to the Tango11 family. As to quaternary structure, homodimer. Interacts with DNM1L. Interacts with C11orf65/MFI; the interaction inhibits MFF interaction with DNM1L.

The protein resides in the mitochondrion outer membrane. It localises to the peroxisome. The protein localises to the cytoplasmic vesicle. It is found in the secretory vesicle. Its subcellular location is the synaptic vesicle. In terms of biological role, plays a role in mitochondrial and peroxisomal fission. Promotes the recruitment and association of the fission mediator dynamin-related protein 1 (DNM1L) to the mitochondrial surface. May be involved in regulation of synaptic vesicle membrane dynamics by recruitment of DNM1L to clathrin-containing vesicles. The sequence is that of Mitochondrial fission factor (MFF) from Pongo abelii (Sumatran orangutan).